A 161-amino-acid chain; its full sequence is Large ribosomal subunit protein uL15 (161 aa).

The interval 1 to 47 (MKLHELHDNPGANRKKKRVARGPGSGKGKTAGRGIKGQTSRSGVALN) is disordered. Over residues 23–35 (PGSGKGKTAGRGI) the composition is skewed to gly residues.

This sequence belongs to the universal ribosomal protein uL15 family. In terms of assembly, part of the 50S ribosomal subunit.

In terms of biological role, binds to the 23S rRNA. The protein is Large ribosomal subunit protein uL15 of Paracoccus denitrificans (strain Pd 1222).